A 957-amino-acid polypeptide reads, in one-letter code: MTQTLSQLENRDAFIERHIGPDAQQQQEMLKTVGADSLNALIGQIVPQDIQLATPPQVGDATTEFAALAELKAIASRNKRFKSYIGMGYTAVQLPPVIQRNMLENPGWYTAYTPYQPEVSQGRLESLLNFQQVTLDLTGLDIASASLLDEATAAAEAMAMAKRVSKLKSANRFFVAADVHPQTLDVVRTRAETFGFDVIVDDADKVLDHQDVFGVLLQQVGTTGEIHDYSKLIAELKARKVIVSVAADFMALVLLTAPGKQGADIVFGSAQRFGVPMGYGGPHAAFFAAKDEFKRSMPGRIIGVSKDAAGNTALRMAMQTREQHIRREKANSNICTSQVLLANIASLYAVFHGPAGLKRIAGRIHRLTDILADGLQKKGLKLRHAHYFDTLCVEVADKAAVLARAEALQINLRSDIHGAVGITLDEATTREDVLNLFRAIVGDDHGLDIDTLDKDVALDSRSIPAAMLRDDAILTHPVFNRYHSETEMMRYMHALERKDLALNQAMIPLGSCTMKLNAAAEMIPITWPEFAELHPFCPVEQAEGYQQMIAQLSDWLVKLTGYDAVCMQPNSGAQGEYAGLLAIRHYHESRNEGHRDICLIPSSAHGTNPASAQMAGMQVVVVACDKNGNIDLADLREKAEQAGANLSCIMVTYPSTHGVYEETIREVCEIVHQFGGQVYLDGANMNAQVGITSPGFIGADVSHLNLHKTFCIPHGGGGPGMGSIGVKAHLAPFVPGHSVVQIEGMLTRQGAVSAAPFGSASILPISWMYIRMMGAEGLKQASQNAILNANYIATRLKDAYPVLYTGRDGRVAHECILDIRPLKEETGISELDIAKRLIDFGFHAPTMSFPVAGTLMVEPTESESKVELDRFIDAMLAIRAEIDRVKAGEWPLEDNPLVNAPHTQGELVGEWNHPYSRELAVFPAGLHNKYWPTVKRLDDVYGDRNLFCSCVPMSEYQ.

Lys708 is modified (N6-(pyridoxal phosphate)lysine).

It belongs to the GcvP family. The glycine cleavage system is composed of four proteins: P, T, L and H. Requires pyridoxal 5'-phosphate as cofactor.

It catalyses the reaction N(6)-[(R)-lipoyl]-L-lysyl-[glycine-cleavage complex H protein] + glycine + H(+) = N(6)-[(R)-S(8)-aminomethyldihydrolipoyl]-L-lysyl-[glycine-cleavage complex H protein] + CO2. In terms of biological role, the glycine cleavage system catalyzes the degradation of glycine. The P protein binds the alpha-amino group of glycine through its pyridoxal phosphate cofactor; CO(2) is released and the remaining methylamine moiety is then transferred to the lipoamide cofactor of the H protein. The polypeptide is Glycine dehydrogenase (decarboxylating) (Klebsiella pneumoniae subsp. pneumoniae (strain ATCC 700721 / MGH 78578)).